Here is a 468-residue protein sequence, read N- to C-terminus: Putative amidase AmiC (468 aa).

Catalysis depends on charge relay system residues lysine 80 and serine 155. Serine 179 functions as the Acyl-ester intermediate in the catalytic mechanism.

The protein belongs to the amidase family.

It catalyses the reaction a monocarboxylic acid amide + H2O = a monocarboxylate + NH4(+). This chain is Putative amidase AmiC (amiC), found in Mycobacterium leprae (strain TN).